The sequence spans 387 residues: Putative odorant receptor 19b (387 aa).

Residues 1-40 (MDISKVDSTRALVNHWRIFRIMGIHPPGKRTFWGRHYTAY) lie on the Cytoplasmic side of the membrane. The chain crosses the membrane as a helical span at residues 41–61 (SMVWNVTFHICIWVSFSVNLL). The Extracellular portion of the chain corresponds to 62–71 (QSNSLETFCE). A helical membrane pass occupies residues 72-92 (SLCVTMPHTLYMLKLINVRRM). The Cytoplasmic portion of the chain corresponds to 93–127 (RGEMISSHWLLRLLDKRLGCADERQIIMAGIERAE). Residues 128–148 (FIFRTIFRGLACTVVLGIIYI) form a helical membrane-spanning segment. Over 149–171 (SASSEPTLMYPTWIPWNWKDSTS) the chain is Extracellular. Residues 172–192 (AYLATAMLHTTALMANATLVL) form a helical membrane-spanning segment. Residues 193–254 (NLSSYPGTYL…LRLFKSLERS (62 aa)) are Cytoplasmic-facing. A helical membrane pass occupies residues 255-275 (LSMTCFLQFFSTACAQCTICY). Residues 276–285 (FLLFGNVGIM) are Extracellular-facing. Residues 286–306 (RFMNMLFLLVILTTETLLLCY) form a helical membrane-spanning segment. At 307–336 (TAELPCKEGESLLTAVYSCNWLSQSVNFRR) the chain is on the cytoplasmic side. The chain crosses the membrane as a helical span at residues 337 to 357 (LLLLMLARCQIPMILVSGVIV). Residues 358–387 (PISMKTFTVMIKGAYTMLTLLNEIRKTSLE) are Extracellular-facing.

It belongs to the insect chemoreceptor superfamily. Heteromeric odorant receptor channel (TC 1.A.69) family. Or2a subfamily. In terms of assembly, interacts with Orco. Complexes exist early in the endomembrane system in olfactory sensory neurons (OSNs), coupling these complexes to the conserved ciliary trafficking pathway.

Its subcellular location is the cell membrane. Functionally, odorant receptor which mediates acceptance or avoidance behavior, depending on its substrates. The odorant receptor repertoire encodes a large collection of odor stimuli that vary widely in identity, intensity, and duration. May form a complex with Orco to form odorant-sensing units, providing sensitive and prolonged odorant signaling and calcium permeability. The chain is Putative odorant receptor 19b from Drosophila melanogaster (Fruit fly).